Consider the following 878-residue polypeptide: Coatomer subunit gamma (878 aa).

6 HEAT repeats span residues 64–101, 287–324, 326–359, 360–396, 399–434, and 471–508; these read REAT…VAED, RMLS…THPA, VTTC…GAES, SVER…KYPR, TVLM…ENAD, and ATPS…SCPA.

This sequence belongs to the COPG family. In terms of assembly, oligomeric complex that consists of at least the alpha, beta, beta', gamma, delta, epsilon and zeta subunits.

It localises to the cytoplasm. Its subcellular location is the golgi apparatus membrane. It is found in the cytoplasmic vesicle. The protein resides in the COPI-coated vesicle membrane. The protein localises to the endoplasmic reticulum. Functionally, the coatomer is a cytosolic protein complex that binds to dilysine motifs and reversibly associates with Golgi non-clathrin-coated vesicles, which further mediate biosynthetic protein transport from the ER, via the Golgi up to the trans Golgi network. Coatomer complex is required for budding from Golgi membranes, and is essential for the retrograde Golgi-to-ER transport of dilysine-tagged proteins. Required for limiting lipid storage in lipid droplets. Involved in the expansion of luminal extracellular matrices and apical membrane during tubulogenesis. Required in the tracheal epithelium for luminal protein secretion and diametric tube growth. In salivary glands, required for deposition of O-glycans and luminal extracellular matrix assembly. Required for epidermal morphogenesis and cuticle development. The protein is Coatomer subunit gamma of Drosophila pseudoobscura pseudoobscura (Fruit fly).